The chain runs to 277 residues: Prohibitin-3, mitochondrial (277 aa).

Gly-2 carries the N-acetylglycine modification. Over 2–6 the chain is Mitochondrial matrix; that stretch reads GSQQA. Residues 7–28 form a helical; Signal-anchor for type II membrane protein membrane-spanning segment; the sequence is AVSFLSNLAKAAFGLGTAATVL. Topologically, residues 29–277 are mitochondrial intermembrane; sequence NTSLFTVDGG…GQSMLFALNR (249 aa).

Belongs to the prohibitin family. In terms of assembly, component of a prohibitin multimeric complex in mitochondrial membranes. As to expression, mostly expressed in proliferative tissues, including vasculature, shoot and root apical tissues. Expressed in roots, stems, leaves and flowers (at protein level).

It localises to the cell membrane. The protein resides in the mitochondrion inner membrane. The protein localises to the nucleus. It is found in the cytoplasm. Prohibitin probably acts as a holdase/unfoldase for the stabilization of newly synthesized mitochondrial proteins. Necessary for mitochondrial and cell metabolism and biogenesis. Required to regulate the ethylene-mediated signaling; involved in growth maintenance in the presence of ethylene. Functions in nitric oxide (NO)-mediated responses and in hydrogen peroxide-induced NO accumulation. The sequence is that of Prohibitin-3, mitochondrial (PHB3) from Arabidopsis thaliana (Mouse-ear cress).